Reading from the N-terminus, the 211-residue chain is uncharacterized protein (211 aa).

This is an uncharacterized protein from Treponema pallidum (strain Nichols).